A 261-amino-acid polypeptide reads, in one-letter code: Ribosomal RNA small subunit methyltransferase A (261 aa).

6 residues coordinate S-adenosyl-L-methionine: asparagine 11, leucine 13, glycine 38, glutamate 59, aspartate 84, and serine 106.

Belongs to the class I-like SAM-binding methyltransferase superfamily. rRNA adenine N(6)-methyltransferase family. RsmA subfamily.

The protein resides in the cytoplasm. It catalyses the reaction adenosine(1518)/adenosine(1519) in 16S rRNA + 4 S-adenosyl-L-methionine = N(6)-dimethyladenosine(1518)/N(6)-dimethyladenosine(1519) in 16S rRNA + 4 S-adenosyl-L-homocysteine + 4 H(+). Specifically dimethylates two adjacent adenosines (A1518 and A1519) in the loop of a conserved hairpin near the 3'-end of 16S rRNA in the 30S particle. May play a critical role in biogenesis of 30S subunits. The sequence is that of Ribosomal RNA small subunit methyltransferase A from Wigglesworthia glossinidia brevipalpis.